A 189-amino-acid polypeptide reads, in one-letter code: Glucose-6-phosphate isomerase (189 aa).

Fe cation-binding residues include His-88, His-90, Glu-97, and His-136.

It belongs to the archaeal-type GPI family. As to quaternary structure, homodimer. Requires Fe cation as cofactor.

Its subcellular location is the cytoplasm. The catalysed reaction is alpha-D-glucose 6-phosphate = beta-D-fructose 6-phosphate. The protein operates within carbohydrate degradation; glycolysis; D-glyceraldehyde 3-phosphate and glycerone phosphate from D-glucose: step 2/4. The chain is Glucose-6-phosphate isomerase (pgiA) from Pyrococcus abyssi (strain GE5 / Orsay).